The sequence spans 185 residues: Large ribosomal subunit protein uL22 (185 aa).

Belongs to the universal ribosomal protein uL22 family.

The protein is Large ribosomal subunit protein uL22 (RPL17) of Debaryomyces hansenii (strain ATCC 36239 / CBS 767 / BCRC 21394 / JCM 1990 / NBRC 0083 / IGC 2968) (Yeast).